Reading from the N-terminus, the 91-residue chain is Cell division protein ZapA (91 aa).

Residues 58-91 adopt a coiled-coil conformation; the sequence is LTAVNIASEYLKLKEEYNRLREQLKKEKDGERDD.

This sequence belongs to the ZapA family. Type 2 subfamily. As to quaternary structure, homodimer. Interacts with FtsZ.

It localises to the cytoplasm. Activator of cell division through the inhibition of FtsZ GTPase activity, therefore promoting FtsZ assembly into bundles of protofilaments necessary for the formation of the division Z ring. It is recruited early at mid-cell but it is not essential for cell division. The polypeptide is Cell division protein ZapA (Geobacillus kaustophilus (strain HTA426)).